Reading from the N-terminus, the 166-residue chain is Small ribosomal subunit protein uS5 (166 aa).

An S5 DRBM domain is found at 11 to 74 (LQEKLIAVNR…EKARRNMINV (64 aa)).

It belongs to the universal ribosomal protein uS5 family. As to quaternary structure, part of the 30S ribosomal subunit. Contacts proteins S4 and S8.

With S4 and S12 plays an important role in translational accuracy. Its function is as follows. Located at the back of the 30S subunit body where it stabilizes the conformation of the head with respect to the body. This chain is Small ribosomal subunit protein uS5, found in Enterobacter sp. (strain 638).